The primary structure comprises 134 residues: Ribosome-binding factor A (134 aa).

Belongs to the RbfA family. Monomer. Binds 30S ribosomal subunits, but not 50S ribosomal subunits or 70S ribosomes.

Its subcellular location is the cytoplasm. In terms of biological role, one of several proteins that assist in the late maturation steps of the functional core of the 30S ribosomal subunit. Associates with free 30S ribosomal subunits (but not with 30S subunits that are part of 70S ribosomes or polysomes). Required for efficient processing of 16S rRNA. May interact with the 5'-terminal helix region of 16S rRNA. This chain is Ribosome-binding factor A, found in Baumannia cicadellinicola subsp. Homalodisca coagulata.